The chain runs to 185 residues: GTP cyclohydrolase 1 (185 aa).

Zn(2+)-binding residues include cysteine 76, histidine 79, and cysteine 147.

This sequence belongs to the GTP cyclohydrolase I family. As to quaternary structure, toroid-shaped homodecamer, composed of two pentamers of five dimers.

The enzyme catalyses GTP + H2O = 7,8-dihydroneopterin 3'-triphosphate + formate + H(+). The protein operates within cofactor biosynthesis; 7,8-dihydroneopterin triphosphate biosynthesis; 7,8-dihydroneopterin triphosphate from GTP: step 1/1. This chain is GTP cyclohydrolase 1, found in Clostridium perfringens (strain 13 / Type A).